The chain runs to 212 residues: Pyrrolidone-carboxylate peptidase (212 aa).

Catalysis depends on residues Glu-78, Cys-141, and His-165.

Belongs to the peptidase C15 family. Homotetramer.

The protein localises to the cytoplasm. The enzyme catalyses Release of an N-terminal pyroglutamyl group from a polypeptide, the second amino acid generally not being Pro.. In terms of biological role, removes 5-oxoproline from various penultimate amino acid residues except L-proline. The polypeptide is Pyrrolidone-carboxylate peptidase (Staphylococcus aureus (strain NCTC 8325 / PS 47)).